A 410-amino-acid polypeptide reads, in one-letter code: Lissencephaly-1 homolog (410 aa).

In terms of domain architecture, LisH spans 7-39; it reads QRDELNRAIADYLRSNGYEEAYSVFKKEAELDV. Residues 56 to 82 adopt a coiled-coil conformation; it reads TSVIRLQKKVMELESKLNEAKEEFTSG. WD repeat units follow at residues 106–147, 148–187, 190–229, 232–271, 274–333, 336–377, and 378–410; these read GHRS…RTLK, GHTDSVQDISFDHTGKLLASCSADMTIKLWDFQGFECIRT, GHDHNVSSVAIMPNGDHIVSASRDKTIKMWEVQTGYCVKT, GHREWVRMVRPNQDGTLIASCSNDQTVRVWVVATKECKAE, EHEH…CLMT, GHDN…KTLN, and AHEHFVTSLDFHKTAPYVVTGSVDQTVKVWECR.

It belongs to the WD repeat LIS1/nudF family. Can self-associate. Component of the cytosolic PAF-AH (I) heterotetrameric enzyme, which is composed of PAFAH1B1 (beta), PAFAH1B2 (alpha2) and PAFAH1B3 (alpha1) subunits. The catalytic activity of the enzyme resides in the alpha1 (PAFAH1B3) and alpha2 (PAFAH1B2) subunits, whereas the beta subunit (PAFAH1B1) has regulatory activity. Trimer formation is not essential for the catalytic activity. Interacts with dynein, dynactin, NDE1 and NDEL1.

The protein resides in the cytoplasm. Its subcellular location is the cytoskeleton. It localises to the microtubule organizing center. It is found in the centrosome. Functionally, regulatory subunit (beta subunit) of the cytosolic type I platelet-activating factor (PAF) acetylhydrolase (PAF-AH (I)), an enzyme that catalyzes the hydrolyze of the acetyl group at the sn-2 position of PAF and its analogs and participates in PAF inactivation. Regulates the PAF-AH (I) activity in a catalytic dimer composition-dependent manner. Positively regulates the activity of the minus-end directed microtubule motor protein dynein. May enhance dynein-mediated microtubule sliding by targeting dynein to the microtubule plus end. Required for several dynein- and microtubule-dependent processes such as the maintenance of Golgi integrity, the peripheral transport of microtubule fragments and the coupling of the nucleus and centrosome. May be required for proliferation of neuronal precursors and neuronal migration. The sequence is that of Lissencephaly-1 homolog from Gallus gallus (Chicken).